The chain runs to 698 residues: MTNRNFRQIINLLDLRWQRRVPVIHQTETAECGLACLAMICGHFGKNIDLIYLRRKFNLSARGATLAGINGIAEQLGMATRALSLELDELRVLKTPCILHWDFSHFVVLVSVKRNRYVLHDPARGIRYISREEMSRYFTGVALEVWPGSEFQSETLQTRISLRSLINSIYGIKRTLAKIFCLSVVIEAINLLMPVGTQLVMDHAIPAGDRGLLTLISAALMFFILLKAATSTLRAWSSLVMSTLINVQWQSGLFDHLLRLPLAFFERRKLGDIQSRFDSLDTLRATFTTSVIGFIMDSIMVVGVCVMMLLYGGYLTWIVLCFTTIYIFIRLVTYGNYRQISEECLVREARAASYFMETLYGIATVKIQGMVGIRGAHWLNMKIDAINSGIKLTRMDLLFGGINTFVTACDQIVILWLGAGLVIDNQMTIGMFVAFSSFRGQFSERVASLTSFLLQLRIMSLHNERIADIALHEKEEKKPEIEIVADMGPISLETNGLSYRYDSQSAPIFSALSLSVAPGESVAITGASGAGKTTLMKVLCGLFEPDSGRVLINGIDIRQIGINNYHRMIACVMQDDRLFSGSIRENICGFAEEMDEEWMVECARASHIHDVIMNMPMGYETLIGELGEGLSGGQKQRIFIARALYRKPGILFMDEATSALDSESEHFVNVAIKNMNITRVIIAHRETTLRTVDRVISI.

Positions 26 to 145 constitute a Peptidase C39 domain; the sequence is QTETAECGLA…RYFTGVALEV (120 aa). The active site involves C32. 7 consecutive transmembrane segments (helical) span residues 33–53, 92–112, 176–196, 211–231, 289–311, 315–334, and 412–432; these read GLAC…LIYL, VLKT…LVSV, LAKI…MPVG, GLLT…AATS, TSVI…MLLY, LTWI…LVTY, and IVIL…IGMF. Positions 176 to 458 constitute an ABC transmembrane type-1 domain; it reads LAKIFCLSVV…LTSFLLQLRI (283 aa). The region spanning 492-698 is the ABC transporter domain; the sequence is LETNGLSYRY…LRTVDRVISI (207 aa). An ATP-binding site is contributed by 526-533; that stretch reads GASGAGKT.

Belongs to the ABC transporter superfamily. Colicin V exporter (TC 3.A.1.110.2) family.

The protein resides in the cell membrane. Involved, in conjunction with CvaA, in the secretion of colicin V. The polypeptide is Colicin V secretion/processing ATP-binding protein CvaB (cvaB) (Escherichia coli).